The chain runs to 392 residues: MTLLGTALRPAATRVMLLGAGELGKEVAIECQRLGIEVIAVDRYPDAPAMHVAHRSHVINMLDGEALRHVITEEKPHYIVPEIEAIATDTLRELEGEGLNVVPCARATQLTMNREGIRRLAAEELGLPTSTYRFADSEASFHDAVAAVGFPCIVKPVMSSSGKGQSFIHSAEQLAQAWEYAQQGGRAGAGRVIVEGVVKFDFEITLLTVSAVDGVHFCAPVGHRQQDGDYRESWQPQQMSELALKRAQEIARHVVLALGGHGLFGVELFVCGDEVIFSEVSPRPHDTGMVTLISQDLSEFALHVRAFLGMPVGAIRQYGPAASAVILPQLTSQNVTFDNVHAAVGAGVQVRLFGKPEIDGSRRLGVALATGENVEEAVIRAKKAASRVTVKG.

N(1)-(5-phospho-beta-D-ribosyl)glycinamide-binding positions include 22–23 (EL) and Glu-82. ATP is bound by residues Arg-114, Lys-155, 160–165 (SSGKGQ), 195–198 (EGVV), and Glu-203. The 190-residue stretch at 119-308 (RLAAEELGLP…EFALHVRAFL (190 aa)) folds into the ATP-grasp domain. Residues Glu-267 and Glu-279 each coordinate Mg(2+). Residues Asp-286, Lys-355, and 362–363 (RR) contribute to the N(1)-(5-phospho-beta-D-ribosyl)glycinamide site.

This sequence belongs to the PurK/PurT family. In terms of assembly, homodimer.

The enzyme catalyses N(1)-(5-phospho-beta-D-ribosyl)glycinamide + formate + ATP = N(2)-formyl-N(1)-(5-phospho-beta-D-ribosyl)glycinamide + ADP + phosphate + H(+). Its pathway is purine metabolism; IMP biosynthesis via de novo pathway; N(2)-formyl-N(1)-(5-phospho-D-ribosyl)glycinamide from N(1)-(5-phospho-D-ribosyl)glycinamide (formate route): step 1/1. Its function is as follows. Involved in the de novo purine biosynthesis. Catalyzes the transfer of formate to 5-phospho-ribosyl-glycinamide (GAR), producing 5-phospho-ribosyl-N-formylglycinamide (FGAR). Formate is provided by PurU via hydrolysis of 10-formyl-tetrahydrofolate. This Salmonella paratyphi B (strain ATCC BAA-1250 / SPB7) protein is Formate-dependent phosphoribosylglycinamide formyltransferase.